Consider the following 254-residue polypeptide: Coenzyme F420:L-glutamate ligase (254 aa).

GTP is bound by residues 11-14 (IPLI), 40-41 (ST), and lysine 45. Residue aspartate 109 coordinates a divalent metal cation. A GTP-binding site is contributed by asparagine 112. A divalent metal cation is bound by residues aspartate 150, threonine 151, and glutamate 208. A GTP-binding site is contributed by 206-213 (MGEGAGGI).

The protein belongs to the CofE family. Homodimer. Requires Mg(2+) as cofactor. It depends on Mn(2+) as a cofactor. K(+) serves as cofactor.

It catalyses the reaction oxidized coenzyme F420-0 + GTP + L-glutamate = oxidized coenzyme F420-1 + GDP + phosphate + H(+). The catalysed reaction is oxidized coenzyme F420-1 + GTP + L-glutamate = oxidized coenzyme F420-2 + GDP + phosphate + H(+). Its pathway is cofactor biosynthesis; coenzyme F420 biosynthesis. Its function is as follows. Catalyzes the GTP-dependent successive addition of two or more gamma-linked L-glutamates to the L-lactyl phosphodiester of 7,8-didemethyl-8-hydroxy-5-deazariboflavin (F420-0) to form coenzyme F420-0-glutamyl-glutamate (F420-2) or polyglutamated F420 derivatives. The sequence is that of Coenzyme F420:L-glutamate ligase from Methanosarcina acetivorans (strain ATCC 35395 / DSM 2834 / JCM 12185 / C2A).